Consider the following 180-residue polypeptide: uncharacterized protein (180 aa).

Residues 1–30 form the signal peptide; it reads MRHKIITFILAVVVIIIIGNMIGGGGGSEA. The interval 25–46 is disordered; sequence GGGSEATSKTSSSSKAETEKTY. A compositionally biased stretch (low complexity) spans 29–39; it reads EATSKTSSSSK.

It localises to the secreted. This is an uncharacterized protein from Bacillus subtilis (strain 168).